Here is a 104-residue protein sequence, read N- to C-terminus: Protein METHYLENE BLUE SENSITIVITY 2 (104 aa).

The segment covering 1 to 11 (MTGKAKPKKHT) has biased composition (basic residues). Disordered stretches follow at residues 1 to 46 (MTGK…GHAK) and 64 to 104 (IHHE…SLKK). Basic and acidic residues-rich tracts occupy residues 36-46 (RTGKEKGGHAK) and 73-82 (LTYEEPRNLH).

The protein localises to the nucleus. It localises to the cytoplasm. The protein resides in the stress granule. In terms of biological role, required for acclimation to reactive oxygen species (ROS) responses downstream of beta-cyclocitral, including singlet oxygen 1O(2) detoxification reactions, especially upon light-mediated photooxidative stress, and leading to programmed cell death. Prevents leaf senescence. This Arabidopsis thaliana (Mouse-ear cress) protein is Protein METHYLENE BLUE SENSITIVITY 2.